We begin with the raw amino-acid sequence, 441 residues long: Methylenetetrahydrofolate--tRNA-(uracil-5-)-methyltransferase TrmFO (441 aa).

7–12 provides a ligand contact to FAD; sequence GAGLSG.

The protein belongs to the MnmG family. TrmFO subfamily. FAD is required as a cofactor.

The protein resides in the cytoplasm. It catalyses the reaction uridine(54) in tRNA + (6R)-5,10-methylene-5,6,7,8-tetrahydrofolate + NADH + H(+) = 5-methyluridine(54) in tRNA + (6S)-5,6,7,8-tetrahydrofolate + NAD(+). The enzyme catalyses uridine(54) in tRNA + (6R)-5,10-methylene-5,6,7,8-tetrahydrofolate + NADPH + H(+) = 5-methyluridine(54) in tRNA + (6S)-5,6,7,8-tetrahydrofolate + NADP(+). Functionally, catalyzes the folate-dependent formation of 5-methyl-uridine at position 54 (M-5-U54) in all tRNAs. In Pseudothermotoga lettingae (strain ATCC BAA-301 / DSM 14385 / NBRC 107922 / TMO) (Thermotoga lettingae), this protein is Methylenetetrahydrofolate--tRNA-(uracil-5-)-methyltransferase TrmFO.